We begin with the raw amino-acid sequence, 251 residues long: Triosephosphate isomerase (251 aa).

Substrate is bound at residue N9–K11. H94 acts as the Electrophile in catalysis. E166 acts as the Proton acceptor in catalysis. Substrate-binding positions include G172, S211, and G232–G233.

The protein belongs to the triosephosphate isomerase family. As to quaternary structure, homodimer.

It localises to the cytoplasm. It carries out the reaction D-glyceraldehyde 3-phosphate = dihydroxyacetone phosphate. The protein operates within carbohydrate biosynthesis; gluconeogenesis. It functions in the pathway carbohydrate degradation; glycolysis; D-glyceraldehyde 3-phosphate from glycerone phosphate: step 1/1. In terms of biological role, involved in the gluconeogenesis. Catalyzes stereospecifically the conversion of dihydroxyacetone phosphate (DHAP) to D-glyceraldehyde-3-phosphate (G3P). The protein is Triosephosphate isomerase of Stenotrophomonas maltophilia (strain R551-3).